The sequence spans 366 residues: MNKVVLLCRPGFEKECAAEITDKAARREIFGFARVKDNAGYVVFECYQPDDAEKIVKELPFSSLIFARQMFVVGELLRDLPPDDRITPIVGMLQGVVEKGGELRVEVADTNESKELMKFCRKFTVPLRAALRDAGILTNYETPKRPVVHVFFIAPGCCYTGYSYPDNNSPFYMGIPRLKFPADAPSRSTLKLEEALHVFIPADEWDERLANGMYAVDLGACPGGWTYQLVKRNMWVYSVDNGPMAQSLMDTGQVTWLREDGFRYRPNRNNISWMVCDMVEKPAKVAALMAQWLVNGWCRETIFNLKLPMKKRYEEVSQNLAYIQAQLDEHGINAQIQARQLYHDREEVTVHVRRLWAAVGGRRDER.

Residues S188, 221-224, D240, D260, and D277 contribute to the S-adenosyl-L-methionine site; that span reads CPGG. The Proton acceptor role is filled by K306.

Belongs to the class I-like SAM-binding methyltransferase superfamily. RNA methyltransferase RlmE family. RlmM subfamily. Monomer.

The protein localises to the cytoplasm. The enzyme catalyses cytidine(2498) in 23S rRNA + S-adenosyl-L-methionine = 2'-O-methylcytidine(2498) in 23S rRNA + S-adenosyl-L-homocysteine + H(+). Its function is as follows. Catalyzes the 2'-O-methylation at nucleotide C2498 in 23S rRNA. The polypeptide is Ribosomal RNA large subunit methyltransferase M (Citrobacter koseri (strain ATCC BAA-895 / CDC 4225-83 / SGSC4696)).